A 200-amino-acid chain; its full sequence is Recombination protein RecR (200 aa).

The C4-type zinc finger occupies C60–C75. Residues T83–P177 enclose the Toprim domain.

This sequence belongs to the RecR family.

Its function is as follows. May play a role in DNA repair. It seems to be involved in an RecBC-independent recombinational process of DNA repair. It may act with RecF and RecO. The chain is Recombination protein RecR from Francisella tularensis subsp. holarctica (strain OSU18).